An 89-amino-acid chain; its full sequence is uncharacterized protein (89 aa).

Position 1 (Met1) is a topological domain, cytoplasmic. Residues 2–22 traverse the membrane as a helical segment; the sequence is LFEIIYIVSSLFYIVSIIYTL. The Extracellular segment spans residues 23–89; it reads MRIKHINTVA…ELKKSKLCEG (67 aa).

The protein localises to the host membrane. This is an uncharacterized protein from Sulfolobus islandicus filamentous virus (isolate Iceland/Hveragerdi) (SIFV).